A 371-amino-acid chain; its full sequence is 4-hydroxybutyrate dehydrogenase (371 aa).

Residues 88–92 (GSVID), 126–130 (TTCGT), and lysine 148 contribute to the NAD(+) site. The Fe cation site is built by aspartate 182, histidine 186, histidine 253, and histidine 267. Residue histidine 267 coordinates NAD(+).

This sequence belongs to the iron-containing alcohol dehydrogenase family. In terms of assembly, homodimer. The cofactor is Fe(2+). It depends on Cu(2+) as a cofactor.

The enzyme catalyses 4-hydroxybutanoate + NAD(+) = succinate semialdehyde + NADH + H(+). With respect to regulation, inactivated by oxygen. Its function is as follows. Involved in the anaerobic succinate degradation pathway. Catalyzes the interconversion of gamma-hydroxybutyrate (GHB) and succinic semialdehyde (SSA). The polypeptide is 4-hydroxybutyrate dehydrogenase (Clostridium kluyveri (strain ATCC 8527 / DSM 555 / NBRC 12016 / NCIMB 10680 / K1)).